The following is a 624-amino-acid chain: DNA mismatch repair protein MutL (624 aa).

The interval 416-436 is disordered; sequence LTPSVDQPDTGDGENPVAPEK.

The protein belongs to the DNA mismatch repair MutL/HexB family.

In terms of biological role, this protein is involved in the repair of mismatches in DNA. It is required for dam-dependent methyl-directed DNA mismatch repair. May act as a 'molecular matchmaker', a protein that promotes the formation of a stable complex between two or more DNA-binding proteins in an ATP-dependent manner without itself being part of a final effector complex. The polypeptide is DNA mismatch repair protein MutL (Chlorobaculum tepidum (strain ATCC 49652 / DSM 12025 / NBRC 103806 / TLS) (Chlorobium tepidum)).